The primary structure comprises 395 residues: ATP phosphoribosyltransferase regulatory subunit (395 aa).

The protein belongs to the class-II aminoacyl-tRNA synthetase family. HisZ subfamily. In terms of assembly, heteromultimer composed of HisG and HisZ subunits.

It is found in the cytoplasm. It functions in the pathway amino-acid biosynthesis; L-histidine biosynthesis; L-histidine from 5-phospho-alpha-D-ribose 1-diphosphate: step 1/9. Functionally, required for the first step of histidine biosynthesis. May allow the feedback regulation of ATP phosphoribosyltransferase activity by histidine. This is ATP phosphoribosyltransferase regulatory subunit from Pseudomonas syringae pv. tomato (strain ATCC BAA-871 / DC3000).